The chain runs to 257 residues: Glutamate racemase (257 aa).

Residues 12 to 13 and 44 to 45 each bind substrate; these read DS and YG. The active-site Proton donor/acceptor is the Cys75. Substrate is bound at residue 76–77; the sequence is NT. Catalysis depends on Cys185, which acts as the Proton donor/acceptor. 186-187 contributes to the substrate binding site; that stretch reads TH.

The protein belongs to the aspartate/glutamate racemases family.

It carries out the reaction L-glutamate = D-glutamate. It functions in the pathway cell wall biogenesis; peptidoglycan biosynthesis. Its function is as follows. Provides the (R)-glutamate required for cell wall biosynthesis. In Clostridium botulinum (strain Loch Maree / Type A3), this protein is Glutamate racemase.